The following is a 337-amino-acid chain: Cytoskeleton protein RodZ (337 aa).

Over 1–111 the chain is Cytoplasmic; the sequence is MNTEATHDQN…LGKRRKKRDG (111 aa). The HTH cro/C1-type domain occupies 19–71; that stretch reads LRNAREQLGLSQQAVAERLCLKVSTVRDIEEDKAPADLASTFLRGYIRSYARL. The H-T-H motif DNA-binding region spans 30 to 49; sequence QQAVAERLCLKVSTVRDIEE. A helical; Signal-anchor for type II membrane protein transmembrane segment spans residues 112-132; that stretch reads WLMTFTWLVLFVVIGLSGAWW. At 133-337 the chain is on the periplasmic side; the sequence is WQDHKAQQEE…TLNAEQSPAQ (205 aa). Residues 145 to 167 show a composition bias toward polar residues; sequence TMADQSSAELSSNSEQGQSVPLN. The segment at 145–218 is disordered; the sequence is TMADQSSAEL…AVVSPSQANV (74 aa). The span at 168 to 207 shows a compositional bias: low complexity; that stretch reads TSTTTDPATTSTPPASVDTTATNTQTPAVTAPAPAVDPQQ. The span at 208–218 shows a compositional bias: polar residues; the sequence is NAVVSPSQANV.

It belongs to the RodZ family.

It is found in the cell inner membrane. In terms of biological role, cytoskeletal protein that is involved in cell-shape control through regulation of the length of the long axis. This chain is Cytoskeleton protein RodZ, found in Shigella dysenteriae serotype 1 (strain Sd197).